Consider the following 149-residue polypeptide: MHSSRRKYNDMWTARLLIRSDQKEEKYPSFKKNAGKAINAHLIPKLSPKMNIMRSSCGRQEISQFQTKIRLFFLPHSCGVNDVTDLGGKDDELVGKRKKWKTEVRIETSMAECNGGKDFTEMTRIYLSIRKNFFQICLKTHSPQLPLGR.

This is an uncharacterized protein from Schizosaccharomyces pombe (strain 972 / ATCC 24843) (Fission yeast).